The following is a 362-amino-acid chain: 3-isopropylmalate dehydrogenase (362 aa).

Residue 78–91 (GPKWETLPPDEQPE) participates in NAD(+) binding. Residues arginine 99, arginine 109, arginine 138, and aspartate 227 each coordinate substrate. Positions 227, 251, and 255 each coordinate Mg(2+). 285–297 (GSAPDIAGQGIAN) lines the NAD(+) pocket.

This sequence belongs to the isocitrate and isopropylmalate dehydrogenases family. LeuB type 1 subfamily. In terms of assembly, homodimer. Requires Mg(2+) as cofactor. Mn(2+) is required as a cofactor.

It is found in the cytoplasm. It carries out the reaction (2R,3S)-3-isopropylmalate + NAD(+) = 4-methyl-2-oxopentanoate + CO2 + NADH. The protein operates within amino-acid biosynthesis; L-leucine biosynthesis; L-leucine from 3-methyl-2-oxobutanoate: step 3/4. Catalyzes the oxidation of 3-carboxy-2-hydroxy-4-methylpentanoate (3-isopropylmalate) to 3-carboxy-4-methyl-2-oxopentanoate. The product decarboxylates to 4-methyl-2 oxopentanoate. The chain is 3-isopropylmalate dehydrogenase from Geobacter metallireducens (strain ATCC 53774 / DSM 7210 / GS-15).